The primary structure comprises 573 residues: Oxygen sensor histidine kinase response regulator DosT (573 aa).

2 consecutive GAF domains span residues 61–198 (KLDA…GIAV) and 229–366 (DPAM…ALAW). A heme-binding site is contributed by H147. In terms of domain architecture, Histidine kinase spans 380–573 (ILTDRDRIAR…TLLRWSAPLR (194 aa)). H392 is subject to Phosphohistidine; by autocatalysis.

Mg(2+) serves as cofactor. It depends on heme as a cofactor.

The protein localises to the cytoplasm. Interacts with the two-component regulatory system DevR/DevS (DosR/DosS) involved in onset of the dormancy response. Required for full induction of the DevR (DosR) regulon; required during early adaptation to anaerobiosis, to start induction of the DevR regulon. May act as a direct hypoxia/oxygen sensor. May be the secondary sensor for CO. Donates a phosphate group to DevR (DosR). The chain is Oxygen sensor histidine kinase response regulator DosT (dosT) from Mycobacterium tuberculosis (strain CDC 1551 / Oshkosh).